The chain runs to 284 residues: Putative ABC transporter ATP-binding protein tll2439 (284 aa).

Residues 6-242 form the ABC transporter domain; that stretch reads LEFHQVGFRY…WPTFAPELGT (237 aa). 40 to 47 contacts ATP; that stretch reads GLNGSGKS.

This sequence belongs to the ABC transporter superfamily.

The protein resides in the cell inner membrane. Functionally, probably part of an ABC transporter complex. Responsible for energy coupling to the transport system. This is Putative ABC transporter ATP-binding protein tll2439 from Thermosynechococcus vestitus (strain NIES-2133 / IAM M-273 / BP-1).